The following is an 852-amino-acid chain: MAVEDSTLQVVVRVRPPTPRELDSQRRPVVQVVDERVLVFNPEEPDGGFPGLKWGGTHDGPKKKGKDLTFVFDRVFGEAATQQDVFQHTTHSVLDSFLQGYNCSVFAYGATGAGKTHTMLGREGDPGIMYLTTVELYRRLEARQQEKHFEVLISYQEVYNEQIHDLLEPKGPLAIREDPDKGVVVQGLSFHQPASAEQLLEILTRGNRNRTQHPTDANATSSRSHAIFQIFVKQQDRVPGLTQAVQVAKMSLIDLAGSERASSTHAKGERLREGANINRSLLALINVLNALADAKGRKTHVPYRDSKLTRLLKDSLGGNCRTVMIAAISPSSLTYEDTYNTLKYADRAKEIRLSLKSNVTSLDCHISQYATICQQLQAEVAALRKKLQVYEGGGQPPPQDLPGSPKSGPPPEHQPCTPELPAGPRALQEESLGMEAQVERAMEGNSSDQEQSPEDEDEGPAEEVPTQMPEQNPTHALPESPRLTLQPKPVVGHFSARELDGDRSKQLALKVLCVAQRQYSLLQAANLLTPDMITEFETLQQLVQEEKIEPGAEALRTSGLARGAPLAQELCSESIPVPSPLCPEPPGYTGPVTRTMARRLSGPLHTLGIPPGPNCTPAQGSRWPMEKKRRRPSALEADSPMAPKRGTKRQRQSFLPCLRRGSLPDTQPSQGPSTPKGERASSPCHSPRVCPATVIKSRVPLGPSAMQNCSTPLALPTRDLNATFDLSEEPPSKPSFHECIGWDKIPQELSRLDQPFIPRAPVPLFTMKGPKPTSSLPGTSACKKKRVASSSVSHGRSRIARLPSSTLKRPAGPLVLPELPLSPLCPSNRRNGKDLIRVGRALSAGNGVTKVS.

The Kinesin motor domain maps to T7–I351. G109–T116 provides a ligand contact to ATP. A coiled-coil region spans residues I366–G393. Disordered regions lie at residues Y390 to P424 and Q437 to L485. Residue S404 is modified to Phosphoserine. Phosphothreonine is present on T417. Residues Q451–A461 are compositionally biased toward acidic residues. Phosphoserine occurs at positions 452, 480, and 558. Disordered regions lie at residues I575–R594 and G602–V689. Residues V577–Y588 are compositionally biased toward pro residues. Positions P624–P632 match the Nuclear localization signal motif. Phosphoserine occurs at positions 633 and 639. Positions S653–P656 match the MAPRE1-binding motif. Residue S662 is modified to Phosphoserine. Residues P664–S673 are compositionally biased toward polar residues. Phosphothreonine is present on T674. The interval T711–F736 is KIF2C-binding. The interval M767 to R798 is disordered. Short sequence motifs (MAPRE1-binding) lie at residues S774 to P777 and A800 to P803. S822 carries the post-translational modification Phosphoserine.

The protein belongs to the TRAFAC class myosin-kinesin ATPase superfamily. Kinesin family. Interacts with MAPRE1; this interaction is required for efficient accumulation at microtubule plus ends. Interacts with KIF2C at microtubule tips; this interaction increases the affinity of both partners for microtubule plus ends and is required for robust microtubule depolymerization. KIF2C phosphorylation by AURKA or AURKB strongly reduces KIF18B-binding. In terms of tissue distribution, shows a prominent expression in the amygdala.

The protein resides in the nucleus. Its subcellular location is the cytoplasm. It localises to the cytoskeleton. Functionally, in complex with KIF2C, constitutes the major microtubule plus-end depolymerizing activity in mitotic cells. Its major role may be to transport KIF2C and/or MAPRE1 along microtubules. This is Kinesin-like protein KIF18B (KIF18B) from Homo sapiens (Human).